A 144-amino-acid chain; its full sequence is Small ribosomal subunit protein eS12y (144 aa).

Ser2 bears the N-acetylserine mark.

Belongs to the eukaryotic ribosomal protein eS12 family.

The protein is Small ribosomal subunit protein eS12y (RPS12C) of Arabidopsis thaliana (Mouse-ear cress).